The primary structure comprises 165 residues: Regulator of ribonuclease activity A (165 aa).

It belongs to the RraA family. As to quaternary structure, homotrimer. Binds to both RNA-binding sites in the C-terminal region of Rne and to RhlB.

The protein resides in the cytoplasm. Globally modulates RNA abundance by binding to RNase E (Rne) and regulating its endonucleolytic activity. Can modulate Rne action in a substrate-dependent manner by altering the composition of the degradosome. Modulates RNA-binding and helicase activities of the degradosome. This chain is Regulator of ribonuclease activity A, found in Pseudoalteromonas translucida (strain TAC 125).